Consider the following 98-residue polypeptide: Large ribosomal subunit protein uL23 (98 aa).

Belongs to the universal ribosomal protein uL23 family. As to quaternary structure, part of the 50S ribosomal subunit. Contacts protein L29, and trigger factor when it is bound to the ribosome.

In terms of biological role, one of the early assembly proteins it binds 23S rRNA. One of the proteins that surrounds the polypeptide exit tunnel on the outside of the ribosome. Forms the main docking site for trigger factor binding to the ribosome. This chain is Large ribosomal subunit protein uL23, found in Bifidobacterium animalis subsp. lactis (strain AD011).